Reading from the N-terminus, the 182-residue chain is Peptidoglycan-recognition protein SB2 (182 aa).

A signal peptide spans 1 to 17; it reads MKLQLALVLCGLTLALG. One can recognise an N-acetylmuramoyl-L-alanine amidase domain in the interval 40 to 165; it reads PVRLIIIHHT…CQTKATACPG (126 aa). Zn(2+) is bound at residue histidine 47. A disulfide bridge links cysteine 54 with cysteine 60. Asparagine 149 carries N-linked (GlcNAc...) asparagine glycosylation. Residues histidine 155 and cysteine 163 each contribute to the Zn(2+) site.

Belongs to the N-acetylmuramoyl-L-alanine amidase 2 family. Zn(2+) is required as a cofactor.

It is found in the secreted. It catalyses the reaction Hydrolyzes the link between N-acetylmuramoyl residues and L-amino acid residues in certain cell-wall glycopeptides.. In terms of biological role, N-acetylmuramyl-L-alanine amidase involved in innate immunity by degrading bacterial peptidoglycans (PGN). Probably plays a scavenger role by digesting biologically active PGN into biologically inactive fragments. Has no direct bacteriolytic activity. The polypeptide is Peptidoglycan-recognition protein SB2 (PGRP-SB2) (Drosophila melanogaster (Fruit fly)).